A 246-amino-acid polypeptide reads, in one-letter code: Chalcone--flavanone isomerase 1 (246 aa).

Residues threonine 59, asparagine 124, and serine 201 each coordinate substrate.

The protein belongs to the chalcone isomerase family. Mostly expressed in siliques and flowers, and, to a lower extent, in leaves.

It carries out the reaction a chalcone = a flavanone.. It participates in secondary metabolite biosynthesis; flavonoid biosynthesis. In terms of biological role, catalyzes the intramolecular cyclization of bicyclic chalcones into tricyclic (S)-flavanones. Responsible for the isomerization of 4,2',4',6'-tetrahydroxychalcone (also termed chalcone) into naringenin. In Arabidopsis thaliana (Mouse-ear cress), this protein is Chalcone--flavanone isomerase 1 (CHI1).